A 233-amino-acid chain; its full sequence is Small ribosomal subunit protein uS5 (233 aa).

2 stretches are compositionally biased toward basic and acidic residues: residues 1 to 12 (MANESEIQKTEN) and 39 to 54 (RGRDGRGRRDDRRNEE). A disordered region spans residues 1–54 (MANESEIQKTENAEVANAANGTNPNNERRGRGGRGRGGRGRDGRGRRDDRRNEE). Positions 59 to 122 (LIEKLVHINR…AAAKKTMIRV (64 aa)) constitute an S5 DRBM domain.

This sequence belongs to the universal ribosomal protein uS5 family. Part of the 30S ribosomal subunit. Contacts proteins S4 and S8.

With S4 and S12 plays an important role in translational accuracy. Its function is as follows. Located at the back of the 30S subunit body where it stabilizes the conformation of the head with respect to the body. This Zymomonas mobilis subsp. mobilis (strain ATCC 31821 / ZM4 / CP4) protein is Small ribosomal subunit protein uS5.